A 389-amino-acid chain; its full sequence is Chalcone synthase 1 (389 aa).

C164 is a catalytic residue.

Belongs to the thiolase-like superfamily. Chalcone/stilbene synthases family.

The catalysed reaction is (E)-4-coumaroyl-CoA + 3 malonyl-CoA + 3 H(+) = 2',4,4',6'-tetrahydroxychalcone + 3 CO2 + 4 CoA. It functions in the pathway secondary metabolite biosynthesis; flavonoid biosynthesis. In terms of biological role, the primary product of this enzyme is 4,2',4',6'-tetrahydroxychalcone (also termed naringenin-chalcone or chalcone) which can under specific conditions spontaneously isomerize into naringenin. This Camellia sinensis (Tea plant) protein is Chalcone synthase 1 (CHS1).